Here is a 754-residue protein sequence, read N- to C-terminus: Polyribonucleotide nucleotidyltransferase (754 aa).

Mg(2+)-binding residues include aspartate 525 and aspartate 531. A KH domain is found at 591–650 (PRITTIKVPVDKIGEVIGPKGKMINSITEETGASISIEDDGTVFVGASNGEAAQAAIDKI). In terms of domain architecture, S1 motif spans 662-731 (GERFLGTVVK…NRGKISLVLV (70 aa)).

The protein belongs to the polyribonucleotide nucleotidyltransferase family. The cofactor is Mg(2+).

Its subcellular location is the cytoplasm. The enzyme catalyses RNA(n+1) + phosphate = RNA(n) + a ribonucleoside 5'-diphosphate. Functionally, involved in mRNA degradation. Catalyzes the phosphorolysis of single-stranded polyribonucleotides processively in the 3'- to 5'-direction. The sequence is that of Polyribonucleotide nucleotidyltransferase from Mycolicibacterium vanbaalenii (strain DSM 7251 / JCM 13017 / BCRC 16820 / KCTC 9966 / NRRL B-24157 / PYR-1) (Mycobacterium vanbaalenii).